A 425-amino-acid chain; its full sequence is Cyclin-K (425 aa).

Residues 262–425 form a disordered region; the sequence is GKQPIPQQPP…RRYLDDDRNL (164 aa). Residues 366-377 are compositionally biased toward low complexity; it reads AEPAAASELDPA. Residues 379-399 show a composition bias toward pro residues; sequence GPAPPLPHGAPPPLPHRPPPT.

This sequence belongs to the cyclin family.

It is found in the nucleus. Its function is as follows. Regulatory subunit of cyclin-dependent kinases that mediates activation of target kinases. Plays a role in transcriptional regulation via its role in regulating the phosphorylation of the C-terminal domain (CTD) of the large subunit of RNA polymerase II (POLR2A). This Danio rerio (Zebrafish) protein is Cyclin-K (ccnk).